The following is a 189-amino-acid chain: Heme-binding protein 1 (189 aa).

Belongs to the HEBP family. As to quaternary structure, monomer.

It is found in the cytoplasm. May bind free porphyrinogens that may be present in the cell and thus facilitate removal of these potentially toxic compound. Binds with a high affinity to one molecule of heme or porphyrins. It binds metalloporphyrins, free porphyrins and N-methylprotoporphyrin with similar affinities. This is Heme-binding protein 1 (HEBP1) from Sus scrofa (Pig).